The chain runs to 47 residues: Large ribosomal subunit protein bL34 (47 aa).

It belongs to the bacterial ribosomal protein bL34 family.

The protein is Large ribosomal subunit protein bL34 of Corynebacterium jeikeium (strain K411).